The primary structure comprises 508 residues: Ribonuclease Y (508 aa).

Residues 2–22 form a helical membrane-spanning segment; that stretch reads IITALIAIAVGFLIGYLARKI. Residues 198 to 261 enclose the KH domain; it reads TVSVVTLPND…EVARIALEKL (64 aa). The region spanning 324–417 is the HD domain; the sequence is VLKHSIEVAH…VQAADAISAA (94 aa).

It belongs to the RNase Y family.

It is found in the cell membrane. Functionally, endoribonuclease that initiates mRNA decay. The protein is Ribonuclease Y of Thermoanaerobacter pseudethanolicus (strain ATCC 33223 / 39E) (Clostridium thermohydrosulfuricum).